The sequence spans 310 residues: Probable cell division protein WhiA (310 aa).

A DNA-binding region (H-T-H motif) is located at residues 277–310 (SLKELAEQVPDGPISKSGVNHRLKKLHEIAENLR).

Belongs to the WhiA family.

Involved in cell division and chromosome segregation. This is Probable cell division protein WhiA from Lactobacillus delbrueckii subsp. bulgaricus (strain ATCC BAA-365 / Lb-18).